The sequence spans 149 residues: Transcriptional repressor NrdR (149 aa).

A zinc finger spans residues 3–34 (CPFCSHSETQVVETRISEDGDSIRRRRQCASC). In terms of domain architecture, ATP-cone spans 49–139 (PAIVKKDGRR…VYRSFEDIDE (91 aa)).

It belongs to the NrdR family. Requires Zn(2+) as cofactor.

In terms of biological role, negatively regulates transcription of bacterial ribonucleotide reductase nrd genes and operons by binding to NrdR-boxes. The polypeptide is Transcriptional repressor NrdR (Albidiferax ferrireducens (strain ATCC BAA-621 / DSM 15236 / T118) (Rhodoferax ferrireducens)).